The chain runs to 502 residues: Solute carrier family 2, facilitated glucose transporter member 5 (502 aa).

N-acetylmethionine is present on methionine 1. Residues 1 to 17 (MEKEDQEKTGKLTLVLA) lie on the Cytoplasmic side of the membrane. Residues 18 to 38 (LATFLAAFGSSFQYGYNVAAV) form a helical membrane-spanning segment. Tyrosine 31 contributes to the D-fructose binding site. Residues 39 to 67 (NSPSEFMQQFYNDTYYDRNKENIESFTLT) are Extracellular-facing. An N-linked (GlcNAc...) asparagine glycan is attached at asparagine 50. A helical membrane pass occupies residues 68–90 (LLWSLTVSMFPFGGFIGSLMVGF). Topologically, residues 91-97 (LVNNLGR) are cytoplasmic. Residues 98 to 118 (KGALLFNNIFSILPAILMGCS) form a helical membrane-spanning segment. Over 119–125 (KIAKSFE) the chain is Extracellular. Residues 126 to 148 (IIIASRLLVGICAGISSNVVPMY) form a helical membrane-spanning segment. Over 149-160 (LGELAPKNLRGA) the chain is Cytoplasmic. A helical membrane pass occupies residues 161 to 181 (LGVVPQLFITVGILVAQLFGL). Residue glutamine 166 coordinates D-fructose. The Extracellular segment spans residues 182-191 (RSVLASEEGW). The chain crosses the membrane as a helical span at residues 192 to 212 (PILLGLTGVPAGLQLLLLPFF). Over 213-276 (PESPRYLLIQ…LFRMQSLRWQ (64 aa)) the chain is Cytoplasmic. A helical transmembrane segment spans residues 277–297 (LISTIVLMAGQQLSGVNAIYY). D-fructose-binding positions include glutamine 287 and 295–297 (IYY). At 298–312 (YADQIYLSAGVKSND) the chain is on the extracellular side. The helical transmembrane segment at 313–333 (VQYVTAGTGAVNVFMTMVTVF) threads the bilayer. The Cytoplasmic portion of the chain corresponds to 334–341 (VVELWGRR). The chain crosses the membrane as a helical span at residues 342 to 362 (NLLLIGFSTCLTACIVLTVAL). Over 363–370 (ALQNTISW) the chain is Extracellular. A helical transmembrane segment spans residues 371 to 393 (MPYVSIVCVIVYVIGHAVGPSPI). Histidine 386 is a D-fructose binding site. Residues 394 to 411 (PALFITEIFLQSSRPSAY) lie on the Cytoplasmic side of the membrane. Residues 412 to 432 (MIGGSVHWLSNFIVGLIFPFI) traverse the membrane as a helical segment. 418–419 (HW) contributes to the D-fructose binding site. At 433-438 (QVGLGP) the chain is on the extracellular side. The helical transmembrane segment at 439-459 (YSFIIFAIICLLTTIYIFMVV) threads the bilayer. Residues 460–502 (PETKGRTFVEINQIFAKKNKVSDVYPEKEEKELNDLPPATREQ) lie on the Cytoplasmic side of the membrane.

The protein belongs to the major facilitator superfamily. Sugar transporter (TC 2.A.1.1) family. Glucose transporter subfamily. As to expression, detected in jejunum. Detected in kidney, skeletal muscle, brain and adipose tissue (at protein level). Detected in small intestine and in kidney, and at much lower levels in brain. Detected in enterocytes in duodenum, jejunum, and ileum.

It is found in the apical cell membrane. Its subcellular location is the cell membrane. The protein localises to the sarcolemma. It carries out the reaction D-fructose(out) = D-fructose(in). Fructose uptake is inhibited by mercury ions. Fructose uptake is only slightly inhibited by cytochalasin B. Its function is as follows. Functions as a fructose transporter that has only low activity with other monosaccharides. Can mediate the uptake of deoxyglucose, but with low efficiency. Essential for fructose uptake in the small intestine. Plays a role in the regulation of salt uptake and blood pressure in response to dietary fructose. Required for the development of high blood pressure in response to high dietary fructose intake. The polypeptide is Solute carrier family 2, facilitated glucose transporter member 5 (Rattus norvegicus (Rat)).